The chain runs to 333 residues: tRNA N6-adenosine threonylcarbamoyltransferase (333 aa).

The Fe cation site is built by His-110 and His-114. Substrate is bound by residues 133–137, Asp-166, Gly-179, Asp-183, and Asn-275; that span reads IVSGG. Asp-302 contributes to the Fe cation binding site.

This sequence belongs to the KAE1 / TsaD family. Fe(2+) serves as cofactor.

The protein localises to the cytoplasm. It carries out the reaction L-threonylcarbamoyladenylate + adenosine(37) in tRNA = N(6)-L-threonylcarbamoyladenosine(37) in tRNA + AMP + H(+). In terms of biological role, required for the formation of a threonylcarbamoyl group on adenosine at position 37 (t(6)A37) in tRNAs that read codons beginning with adenine. Is involved in the transfer of the threonylcarbamoyl moiety of threonylcarbamoyl-AMP (TC-AMP) to the N6 group of A37, together with TsaE and TsaB. TsaD likely plays a direct catalytic role in this reaction. This Thermodesulfovibrio yellowstonii (strain ATCC 51303 / DSM 11347 / YP87) protein is tRNA N6-adenosine threonylcarbamoyltransferase.